We begin with the raw amino-acid sequence, 172 residues long: Glutamyl-tRNA(Gln) amidotransferase subunit C-3, mitochondrial (172 aa).

Positions 49 to 71 (KHPSKVPQRPNKSTIDGQSTPTR) are disordered. Positions 58 to 71 (PNKSTIDGQSTPTR) are enriched in polar residues.

It belongs to the GatC family. Subunit of the heterotrimeric GatCAB amidotransferase (AdT) complex, composed of A, B and C subunits.

The protein resides in the mitochondrion. The enzyme catalyses L-glutamyl-tRNA(Gln) + L-glutamine + ATP + H2O = L-glutaminyl-tRNA(Gln) + L-glutamate + ADP + phosphate + H(+). Allows the formation of correctly charged Gln-tRNA(Gln) through the transamidation of misacylated Glu-tRNA(Gln) in the mitochondria. The reaction takes place in the presence of glutamine and ATP through an activated gamma-phospho-Glu-tRNA(Gln). This chain is Glutamyl-tRNA(Gln) amidotransferase subunit C-3, mitochondrial, found in Culex quinquefasciatus (Southern house mosquito).